The chain runs to 151 residues: D-ribose pyranase 1 (151 aa).

Residue His20 is the Proton donor of the active site. Substrate is bound by residues Asp28, His98, and 121 to 123 (WGN).

Belongs to the RbsD / FucU family. RbsD subfamily. As to quaternary structure, homodecamer.

The protein localises to the cytoplasm. It carries out the reaction beta-D-ribopyranose = beta-D-ribofuranose. The protein operates within carbohydrate metabolism; D-ribose degradation; D-ribose 5-phosphate from beta-D-ribopyranose: step 1/2. Functionally, catalyzes the interconversion of beta-pyran and beta-furan forms of D-ribose. The chain is D-ribose pyranase 1 from Streptomyces griseus subsp. griseus (strain JCM 4626 / CBS 651.72 / NBRC 13350 / KCC S-0626 / ISP 5235).